We begin with the raw amino-acid sequence, 839 residues long: Toll-like receptor 4 (839 aa).

A signal peptide spans 1–23; the sequence is MMSASRLAGTLIPAMAFLSCVRP. Topologically, residues 24–631 are extracellular; sequence ESWEPCVEVV…SLNITCQMNK (608 aa). A disulfide bond links C29 and C40. N-linked (GlcNAc...) asparagine glycosylation is present at N35. LRR repeat units follow at residues 55 to 76, 79 to 100, 103 to 124, 127 to 148, and 151 to 172; these read STKN…SFFS, ELQV…AYQS, HLST…AFSG, SLQK…PIGH, and TLKE…EYFS. N-linked (GlcNAc...) asparagine glycosylation occurs at N173. LRR repeat units lie at residues 176–199, 205–225, and 227–247; these read NLEH…RVLH, NLSL…AFKE, and RLHK…KTCI. N-linked (GlcNAc...) asparagine glycosylation is present at N205. The cysteines at positions 281 and 306 are disulfide-linked. N-linked (GlcNAc...) asparagine glycans are attached at residues N282 and N309. 10 LRR repeats span residues 331–351, 352–373, 374–394, 400–422, 423–444, 448–456, 472–495, 497–518, 521–542, and 545–565; these read GWQH…LKLK, SLKR…VDLP, SLEF…CSQS, SLKY…LGLE, QLEH…SVFL, NLIYLDISH, SLEV…FTEL, NLTF…AFNS, SLQV…PYKC, and SLQV…QELQ. The cysteines at positions 390 and 391 are disulfide-linked. 2 N-linked (GlcNAc...) asparagine glycosylation sites follow: N497 and N526. N-linked (GlcNAc...) asparagine glycosylation is present at N575. The LRRCT domain maps to 579–629; it reads NDFACTCEHQSFLQWIKDQRQLLVEVERMECATPSDKQGMPVLSLNITCQM. Cystine bridges form between C583–C609 and C585–C627. 2 N-linked (GlcNAc...) asparagine glycosylation sites follow: N624 and N630. A helical membrane pass occupies residues 632-652; the sequence is TIIGVSVLSVLVVSVVAVLVY. Residues 653–839 lie on the Cytoplasmic side of the membrane; it reads KFYFHLMLLA…GCNWQEATSI (187 aa). Positions 672–815 constitute a TIR domain; it reads NIYDAFVIYS…IFWRRLRKAL (144 aa).

Belongs to the Toll-like receptor family. In terms of assembly, belongs to the lipopolysaccharide (LPS) receptor, a multi-protein complex containing at least CD14, LY96 and TLR4. Binding to bacterial LPS leads to homodimerization. Interacts with LY96 via the extracellular domain. Interacts with MYD88. Interacts (via TIR domains) with TIRAP. Interacts with TICAM2. Interacts with NOX4. Interacts with CNPY3. Interacts with HSP90B1. The interaction with both CNPY3 and HSP90B1 is required for proper folding in the endoplasmic reticulum. Interacts with MAP3K21; this interaction leads to negative regulation of TLR4 signaling. Interacts with CD36, following CD36 stimulation by oxLDL or amyloid-beta 42, and forms a heterodimer with TLR6. The trimeric complex is internalized and triggers inflammatory response. LYN kinase activity facilitates TLR4-TLR6 heterodimerization and signal initiation. Interacts with TICAM1 in response to LPS in a WDFY1-dependent manner. Interacts with WDFY1 in response to LPS. Interacts with SMPDL3B. Interacts with CEACAM1; upon lipopolysaccharide stimulation, forms a complex including TLR4 and the phosphorylated form of SYK and CEACAM1, which in turn, recruits PTPN6 that dephosphorylates SYK, reducing the production of reactive oxygen species (ROS) and lysosome disruption, which in turn, reduces the activity of the inflammasome. Interacts with RFTN1; the interaction occurs in response to lipopolysaccharide stimulation. Interacts with SCIMP; the interaction occurs in response to lipopolysaccharide stimulation and is enhanced by phosphorylation of SCIMP by LYN. This interaction facilitates the phosphorylation of TLR4 by LYN which elicits a selective cytokine response in macrophages. Interacts with TRAF3IP3. Interacts with TREM1; this interaction enhances TLR4-mediated inflammatory response. Interacts with ZG16B/PAUF. Interacts with CD82; this interaction inhibits TLR4-mediated signaling pathway. Interacts with neutrophil recruitment protein from Aedes aegypti saliva; the interaction probably promotes activation of canonical NF-kappa-B signaling in skin-resident macrophages and subsequent expression of neutrophil chemoattractants. (Microbial infection) In case of infection, interacts with uropathogenic E.coli protein TcpC. As to quaternary structure, (Microbial infection) In case of infection, interacts with B.melitensis protein TcpB; TcpB abolishes the TLR4-TIRAP interaction in vitro. In terms of assembly, (Microbial infection) Interacts with ebolavirus protein GP; this interaction leads to the production of proinflammatory cytokines and suppressor of cytokine signaling 1/SOCS1. Post-translationally, N-Glycosylation of Asn-526 and Asn-575 by STT3A-containing OST-A complex is necessary for the expression of TLR4 on the cell surface and the LPS-response. Likewise, mutants lacking two or more of the other N-glycosylation sites were deficient in interaction with LPS. In terms of processing, phosphorylated on tyrosine residues by LYN after binding lipopolysaccharide. Ubiquitinated by RNF128 via 'Lys-28'-linked polyubiquitin chains, leading to proteasomal degradation. Highly expressed in placenta, spleen and peripheral blood leukocytes. Detected in monocytes, macrophages, dendritic cells and several types of T-cells. Expressed in pancreatic cancer cells but not in normal pancreatic cells (at protein level).

It localises to the cell membrane. The protein resides in the early endosome. It is found in the cell projection. The protein localises to the ruffle. Functionally, transmembrane receptor that functions as a pattern recognition receptor recognizing pathogen- and damage-associated molecular patterns (PAMPs and DAMPs) to induce innate immune responses via downstream signaling pathways. At the plasma membrane, cooperates with LY96 to mediate the innate immune response to bacterial lipopolysaccharide (LPS). Also involved in LPS-independent inflammatory responses triggered by free fatty acids, such as palmitate, and Ni(2+). Mechanistically, acts via MYD88, TIRAP and TRAF6, leading to NF-kappa-B activation, cytokine secretion and the inflammatory response. Alternatively, CD14-mediated TLR4 internalization via endocytosis is associated with the initiation of a MYD88-independent signaling via the TICAM1-TBK1-IRF3 axis leading to type I interferon production. In addition to the secretion of proinflammatory cytokines, initiates the activation of NLRP3 inflammasome and formation of a positive feedback loop between autophagy and NF-kappa-B signaling cascade. In complex with TLR6, promotes inflammation in monocytes/macrophages by associating with TLR6 and the receptor CD86. Upon ligand binding, such as oxLDL or amyloid-beta 42, the TLR4:TLR6 complex is internalized and triggers inflammatory response, leading to NF-kappa-B-dependent production of CXCL1, CXCL2 and CCL9 cytokines, via MYD88 signaling pathway, and CCL5 cytokine, via TICAM1 signaling pathway. In myeloid dendritic cells, vesicular stomatitis virus glycoprotein G but not LPS promotes the activation of IRF7, leading to type I IFN production in a CD14-dependent manner. Required for the migration-promoting effects of ZG16B/PAUF on pancreatic cancer cells. This chain is Toll-like receptor 4 (TLR4), found in Homo sapiens (Human).